A 154-amino-acid polypeptide reads, in one-letter code: Ribonuclease H (154 aa).

The RNase H type-1 domain occupies M1–L142. Positions 10, 48, 70, and 134 each coordinate Mg(2+).

This sequence belongs to the RNase H family. As to quaternary structure, monomer. The cofactor is Mg(2+).

The protein localises to the cytoplasm. The catalysed reaction is Endonucleolytic cleavage to 5'-phosphomonoester.. Functionally, endonuclease that specifically degrades the RNA of RNA-DNA hybrids. The sequence is that of Ribonuclease H from Tolumonas auensis (strain DSM 9187 / NBRC 110442 / TA 4).